The primary structure comprises 596 residues: Fructan 1-exohydrolase w3 (596 aa).

Positions 1 to 20 are cleaved as a signal peptide; that stretch reads MAQAWAFLLPVLVLGSYVTS. D75 is an active-site residue. N168, N236, and N248 each carry an N-linked (GlcNAc...) asparagine glycan. C446 and C492 are oxidised to a cystine.

It belongs to the glycosyl hydrolase 32 family. In terms of tissue distribution, expressed in the stem, particularly the penultimate internode. Little expression is detected in roots and in the peduncle part of the stem.

The enzyme catalyses Hydrolysis of terminal, non-reducing (2-&gt;1)-linked beta-D-fructofuranose residues in fructans.. Its activity is regulated as follows. Inhibited by sucrose. In terms of biological role, hydrolyzes inulin-type beta-(2,1)-fructans and beta-(2,1)-linkages in branched fructans. Has low activity against beta-(2,6)-linked fructans. May play a role as a beta-(2,1)-trimmer during graminan biosynthesis. This is Fructan 1-exohydrolase w3 from Triticum aestivum (Wheat).